Reading from the N-terminus, the 190-residue chain is 3-isopropylmalate dehydratase small subunit (190 aa).

It belongs to the LeuD family. LeuD type 1 subfamily. Heterodimer of LeuC and LeuD.

It carries out the reaction (2R,3S)-3-isopropylmalate = (2S)-2-isopropylmalate. The protein operates within amino-acid biosynthesis; L-leucine biosynthesis; L-leucine from 3-methyl-2-oxobutanoate: step 2/4. Functionally, catalyzes the isomerization between 2-isopropylmalate and 3-isopropylmalate, via the formation of 2-isopropylmaleate. This is 3-isopropylmalate dehydratase small subunit from Staphylococcus aureus (strain MSSA476).